The chain runs to 157 residues: Small ribosomal subunit protein bS16 (157 aa).

The disordered stretch occupies residues 114 to 157 (NEGPTAEAITEKKKKAKEEAAAKAAAEAEAAAKAEEAPAEEAAE).

This sequence belongs to the bacterial ribosomal protein bS16 family.

The protein is Small ribosomal subunit protein bS16 of Corynebacterium diphtheriae (strain ATCC 700971 / NCTC 13129 / Biotype gravis).